The following is a 177-amino-acid chain: SsrA-binding protein (177 aa).

2 disordered regions span residues 1–23 (MYVPKESQPKQGGGASGKVKDGK) and 148–177 (YDKRQTLREKQDRRESDRAIAAAKRKQRGE). Positions 148–165 (YDKRQTLREKQDRRESDR) are enriched in basic and acidic residues.

The protein belongs to the SmpB family.

It is found in the cytoplasm. Functionally, required for rescue of stalled ribosomes mediated by trans-translation. Binds to transfer-messenger RNA (tmRNA), required for stable association of tmRNA with ribosomes. tmRNA and SmpB together mimic tRNA shape, replacing the anticodon stem-loop with SmpB. tmRNA is encoded by the ssrA gene; the 2 termini fold to resemble tRNA(Ala) and it encodes a 'tag peptide', a short internal open reading frame. During trans-translation Ala-aminoacylated tmRNA acts like a tRNA, entering the A-site of stalled ribosomes, displacing the stalled mRNA. The ribosome then switches to translate the ORF on the tmRNA; the nascent peptide is terminated with the 'tag peptide' encoded by the tmRNA and targeted for degradation. The ribosome is freed to recommence translation, which seems to be the essential function of trans-translation. The chain is SsrA-binding protein from Streptomyces avermitilis (strain ATCC 31267 / DSM 46492 / JCM 5070 / NBRC 14893 / NCIMB 12804 / NRRL 8165 / MA-4680).